A 738-amino-acid polypeptide reads, in one-letter code: Putative cyclic nucleotide-gated ion channel 7 (738 aa).

The Cytoplasmic segment spans residues 1–104 (MYKSQYISGQ…DKTLLVWNRL (104 aa)). A helical membrane pass occupies residues 105–125 (FVISCILAVSVDPLFFYLPIV). The Extracellular segment spans residues 126–139 (DNSGSSCIGIDTKL). Residues 140–160 (AVTTTTLRTIVDVFYLTRMAL) form a helical membrane-spanning segment. At 161-193 (QFRTAYIAPSSRVFGRGELVIDPAKIAERYLTR) the chain is on the cytoplasmic side. Residues 194 to 214 (YFVVDFLAVLPLPQIAVWKFL) traverse the membrane as a helical segment. The Extracellular segment spans residues 215–227 (HGSKGSDVLPTKT). A helical transmembrane segment spans residues 228–248 (ALLNIVIVQYIPRFVRFIPLT). Residues 249–268 (SELKKTAGAFAEGAWAGAAY) are Cytoplasmic-facing. Residues 269–289 (YLLWYMLASHITGAFWYMLSV) traverse the membrane as a helical segment. Topologically, residues 290–395 (ERNDTCWRFA…GQGLQTSTFP (106 aa)) are extracellular. A helical membrane pass occupies residues 396–416 (GEVLFSIAIAIAGLLLFALLI). Residues 417 to 738 (GNMQTYLQSL…KPPEPDFDAE (322 aa)) lie on the Cytoplasmic side of the membrane. A nucleoside 3',5'-cyclic phosphate-binding positions include 502–632 (LFAN…TFRF) and Glu573. The segment at 618 to 633 (FRRLHSRQVQQTFRFY) is calmodulin-binding. Residues 638–667 (RTWASCFIQAAWRRYSRRKNAELRRIEEKE) form the IQ domain. Disordered stretches follow at residues 671-693 (GYED…SESS) and 715-738 (LRSS…FDAE).

The protein belongs to the cyclic nucleotide-gated cation channel (TC 1.A.1.5) family. As to quaternary structure, homotetramer or heterotetramer.

The protein resides in the cell membrane. In terms of biological role, putative cyclic nucleotide-gated ion channel. This chain is Putative cyclic nucleotide-gated ion channel 7 (CNGC7), found in Arabidopsis thaliana (Mouse-ear cress).